Here is a 335-residue protein sequence, read N- to C-terminus: Probable E3 ubiquitin-protein ligase BAH1-like (335 aa).

The SPX domain maps to 1–163 (MKFGETFTEY…SSENGKNFKL (163 aa)). The RING-type zinc-finger motif lies at 231–280 (CAICLETVFNPYALKCGHIFCNSCACSAASVLIFQGIKAAPRHSKCPICR).

Belongs to the RING-type zinc finger family.

It carries out the reaction S-ubiquitinyl-[E2 ubiquitin-conjugating enzyme]-L-cysteine + [acceptor protein]-L-lysine = [E2 ubiquitin-conjugating enzyme]-L-cysteine + N(6)-ubiquitinyl-[acceptor protein]-L-lysine.. It participates in protein modification; protein ubiquitination. In Arabidopsis thaliana (Mouse-ear cress), this protein is Probable E3 ubiquitin-protein ligase BAH1-like (RF178).